We begin with the raw amino-acid sequence, 214 residues long: MIDNYSTAREKMLREQIVARGVTDMATLDAILEVPRHFFVDEGQRMRAYGDYPLSITEGQTISQPYIVAYMTSLLQLTASDTVLEIGTGSGYQAAILSKICRQVYTVECIHSLLNKARKVFDSLRYFNIRSKYDDGSRGWSEFAPYDAIIVTAGSPEIPTPLLDQLADGGRMVIPVGPRYEQVLKRVTKEGDDFVVEDLAPVRFVDLVGVHGWK.

S63 is an active-site residue.

Belongs to the methyltransferase superfamily. L-isoaspartyl/D-aspartyl protein methyltransferase family.

It is found in the cytoplasm. The catalysed reaction is [protein]-L-isoaspartate + S-adenosyl-L-methionine = [protein]-L-isoaspartate alpha-methyl ester + S-adenosyl-L-homocysteine. Its function is as follows. Catalyzes the methyl esterification of L-isoaspartyl residues in peptides and proteins that result from spontaneous decomposition of normal L-aspartyl and L-asparaginyl residues. It plays a role in the repair and/or degradation of damaged proteins. This Desulfotalea psychrophila (strain LSv54 / DSM 12343) protein is Protein-L-isoaspartate O-methyltransferase.